A 450-amino-acid chain; its full sequence is MSLLQFSGLFVVWLLCTLFIATLTWFEFRRVRFNFNVFFSLLFLLTFFFGFPLTSVLVFRFDVGVAPPEILLQALLSAGCFYAVYYVTYKTRLRKRVADVPRRPLFTMNRVETNLTWVILMGVALVSVGIFFMHNGFLLFRLNSYSQIFSSEVSGVALKRFFYFFIPAMLVVYFLRQDSKAWLFFLVSTVAFGLLTYMIVGGTRANIIIAFAIFLFIGIIRGWISLWMLAAAGVLGIVGMFWLALKRYGMNVSGDEAFYTFLYLTRDTFSPWENLALLLQNYDNIDFQGLAPIVRDFYVFIPSWLWPGRPSMVLNTANYFTWEVLNNHSGLAISPTLIGSLVVMGGALFIPLGAIVVGLIIKWFDWLYELGNREPNRYKAAILHSFCFGAIFNMIVLAREGLDSFVSRVVFFIVVFGACLMIAKLLYWLFESAGLIHKRTKSSLRTQVEG.

Transmembrane regions (helical) follow at residues Phe-6–Phe-26, Val-37–Leu-57, Val-63–Ala-83, Val-118–Leu-138, Gly-155–Leu-175, Ala-181–Gly-201, Ile-207–Trp-227, Met-228–Tyr-248, Leu-341–Ile-361, Tyr-378–Ala-398, and Val-410–Phe-430.

This sequence belongs to the WzyE family. In terms of assembly, probably part of a complex composed of WzxE, WzyE and WzzE.

The protein resides in the cell inner membrane. It functions in the pathway bacterial outer membrane biogenesis; enterobacterial common antigen biosynthesis. In terms of biological role, probably involved in the polymerization of enterobacterial common antigen (ECA) trisaccharide repeat units. The sequence is that of Probable ECA polymerase from Escherichia coli O17:K52:H18 (strain UMN026 / ExPEC).